A 426-amino-acid polypeptide reads, in one-letter code: Ammonium transporter Rh type A (426 aa).

Residues 1–4 are Cytoplasmic-facing; that stretch reads MRFK. Residues 5–25 traverse the membrane as a helical segment; it reads FPLMAIGLEVVMIVLFALFVQ. Residues 26–54 lie on the Extracellular side of the membrane; sequence YETSVNTSRNPNETESAAMDVEKTMESYP. N-linked (GlcNAc...) asparagine glycosylation is found at N31 and N37. The helical transmembrane segment at 55–75 threads the bilayer; that stretch reads FFQDVHIMVFAGFGFLMTFLW. At 76-78 the chain is on the cytoplasmic side; sequence KYG. The helical transmembrane segment at 79-99 threads the bilayer; it reads FSGVGINLLIAALGLQWGTII. Topologically, residues 100–124 are extracellular; it reads QGIFRSHGQKFLIEMKNMIHADFST. The next 2 membrane-spanning stretches (helical) occupy residues 125–145 and 146–166; these read VTVLISFGAVLGKTSPVQMLI and MTILEITVYAANEYLVFKILW. Residues 167 to 170 are Extracellular-facing; sequence ASDT. The helical transmembrane segment at 171–191 threads the bilayer; sequence GESMTIHAFGAYFGLAVAGIL. Residues 192–210 lie on the Cytoplasmic side of the membrane; that stretch reads YRSGLKEKHSNEESVYHSD. Residues 211–231 traverse the membrane as a helical segment; the sequence is LFAMIGSLFLWIFWPSFNSAT. Topologically, residues 232 to 241 are extracellular; sequence ADEAKKQYRA. Residues 242 to 262 form a helical membrane-spanning segment; the sequence is IVNTYFSLAASVVTAYACSSL. Residues 263–270 are Cytoplasmic-facing; it reads LESRGKLN. The helical transmembrane segment at 271–288 threads the bilayer; the sequence is MVHIQNATLAGGVAVGTC. The Extracellular portion of the chain corresponds to 289 to 292; the sequence is ADME. A helical membrane pass occupies residues 293-313; the sequence is IPPYYAMIIGSIAGAVSVFGF. Topologically, residues 314-331 are cytoplasmic; that stretch reads KFLTPLFTTKLRIHDTCG. Residues 332–352 form a helical membrane-spanning segment; that stretch reads VHNLHGLPGVIGGLAGIITVA. The Extracellular portion of the chain corresponds to 353–371; the sequence is LEESDSTKTVSQAAALGSS. The chain crosses the membrane as a helical span at residues 372-392; the sequence is IATALVGGLITGAILKIPFWA. The Cytoplasmic segment spans residues 393–426; sequence QPPDEDCYDDSVYWEVPERKEYDNHFHELLSTLH.

It belongs to the ammonium transporter (TC 2.A.49) family. Rh subfamily. In terms of assembly, homodimer. Heterotrimer; a RHCE monomer interacts with a RHAG homodimer. Component of the ankyrin-1 complex in the erythrocyte, composed of ANK1, RHCE, RHAG, SLC4A1, EPB42, GYPA, GYPB and AQP1. Interacts with GYPB (via the N-terminal); this interaction bridges the (RHAG)2(RHCE) heterotrimer with the SLC4A1 Band 3 I dimer complexed with GYPA. In terms of processing, glycosylated.

Its subcellular location is the membrane. The enzyme catalyses methylamine(out) = methylamine(in). The catalysed reaction is NH4(+)(in) = NH4(+)(out). It carries out the reaction CO2(out) = CO2(in). Its function is as follows. Component of the ankyrin-1 complex, a multiprotein complex involved in the stability and shape of the erythrocyte membrane. Heterotrimer with RHCE (RHAG)2(RHCE), that transports ammonium and its related derivative methylammonium, in both neutral and ionic forms, across the erythrocyte membrane. The transport of NH4(+) is electrogenic and masks the NH3 transport. Also, may act as a CO2 channel. Moreover in erythrocyte, regulates RHD membrane expression and is associated with rhesus blood group antigen expression. The polypeptide is Ammonium transporter Rh type A (Bos taurus (Bovine)).